We begin with the raw amino-acid sequence, 313 residues long: MSGIDPKRFGKVAVLFGGESAEREVSLTSGRLVLQGLRDAGIDAHLFDPAERPLSALKDEGFVRAFNALHGGYGENGQIQGALDFYGIRYTGSGVLGSALGLDKFRTKLVWQQTGVPTPPFETVLRGDDYAARATEIVAKLGLPLFVKPASEGSSVAVLKVKTADALPAALSEAATHDKIVIVEKSIEGGGEYTACIAGDLDLPLIKIVPAGEFYDYHAKYVADDTQYLIPCGLPAAQEAELKRIARRAFDVLGCTDWGRADFMLDAAGNAYFLEVNTAPGMTDHSLPPKAARSIGISYSELVVKVLSLTLND.

The ATP-grasp domain maps to Lys-108–Ser-308. ATP is bound at residue Val-138 to Tyr-193. Asp-262, Glu-275, and Asn-277 together coordinate Mg(2+).

This sequence belongs to the D-alanine--D-alanine ligase family. Mg(2+) serves as cofactor. Requires Mn(2+) as cofactor.

It is found in the cytoplasm. It carries out the reaction 2 D-alanine + ATP = D-alanyl-D-alanine + ADP + phosphate + H(+). It participates in cell wall biogenesis; peptidoglycan biosynthesis. Functionally, cell wall formation. This is D-alanine--D-alanine ligase from Burkholderia vietnamiensis (strain G4 / LMG 22486) (Burkholderia cepacia (strain R1808)).